The chain runs to 337 residues: DNA-directed RNA polymerase subunit alpha (337 aa).

The tract at residues 1 to 233 (MVREKVTVST…DLFIPFLHME (233 aa)) is alpha N-terminal domain (alpha-NTD). The interval 264 to 337 (NKKIALKSIF…FVIDLAKNKF (74 aa)) is alpha C-terminal domain (alpha-CTD).

This sequence belongs to the RNA polymerase alpha chain family. As to quaternary structure, in plastids the minimal PEP RNA polymerase catalytic core is composed of four subunits: alpha, beta, beta', and beta''. When a (nuclear-encoded) sigma factor is associated with the core the holoenzyme is formed, which can initiate transcription.

It is found in the plastid. The protein localises to the chloroplast. The enzyme catalyses RNA(n) + a ribonucleoside 5'-triphosphate = RNA(n+1) + diphosphate. Its function is as follows. DNA-dependent RNA polymerase catalyzes the transcription of DNA into RNA using the four ribonucleoside triphosphates as substrates. The protein is DNA-directed RNA polymerase subunit alpha of Atropa belladonna (Belladonna).